We begin with the raw amino-acid sequence, 229 residues long: Type III pantothenate kinase (229 aa).

ATP is bound at residue 7–14; it reads DVGNSSVD. Substrate-binding positions include tyrosine 78 and 85–88; that span reads GTDR. Residue aspartate 87 is the Proton acceptor of the active site. Threonine 110 contributes to the ATP binding site. Residue threonine 161 coordinates substrate.

The protein belongs to the type III pantothenate kinase family. As to quaternary structure, homodimer. The cofactor is NH4(+). K(+) serves as cofactor.

It localises to the cytoplasm. The enzyme catalyses (R)-pantothenate + ATP = (R)-4'-phosphopantothenate + ADP + H(+). The protein operates within cofactor biosynthesis; coenzyme A biosynthesis; CoA from (R)-pantothenate: step 1/5. Catalyzes the phosphorylation of pantothenate (Pan), the first step in CoA biosynthesis. The polypeptide is Type III pantothenate kinase (Aquifex aeolicus (strain VF5)).